The primary structure comprises 121 residues: Large ribosomal subunit protein uL14c (121 aa).

The protein belongs to the universal ribosomal protein uL14 family. Part of the 50S ribosomal subunit.

It localises to the plastid. The protein localises to the chloroplast. Functionally, binds to 23S rRNA. This chain is Large ribosomal subunit protein uL14c, found in Thalassiosira pseudonana (Marine diatom).